Reading from the N-terminus, the 212-residue chain is Dephospho-CoA kinase (212 aa).

In terms of domain architecture, DPCK spans 8–212; it reads LVGVTGGLGS…QLLQQAMLRR (205 aa). ATP is bound at residue 16–21; sequence GSGKSM.

This sequence belongs to the CoaE family.

Its subcellular location is the cytoplasm. It catalyses the reaction 3'-dephospho-CoA + ATP = ADP + CoA + H(+). It functions in the pathway cofactor biosynthesis; coenzyme A biosynthesis; CoA from (R)-pantothenate: step 5/5. Its function is as follows. Catalyzes the phosphorylation of the 3'-hydroxyl group of dephosphocoenzyme A to form coenzyme A. In Chlorobium chlorochromatii (strain CaD3), this protein is Dephospho-CoA kinase.